The sequence spans 454 residues: Protoheme IX farnesyltransferase 1 (454 aa).

Positions 1–186 are unknown; sequence MRTTGFSGLL…AYFELTKPRL (186 aa). 4 consecutive transmembrane segments (helical) span residues 9 to 29, 59 to 79, 87 to 107, and 113 to 133; these read LLSATVVGVYVLVVVGATAAL, GVAAVVGLLVIATAVVGWSET, LALALALYPAQVVLGALVATG, and LHLFVAMAIFAVLVVGLAWHL. Residues 137-164 form a disordered region; sequence TGSDDAPESPPELAPPVDEEPAATEQPA. 9 helical membrane passes run 186–206, 209–229, 251–271, 276–296, 300–320, 321–341, 377–397, 398–418, and 433–453; these read LMWLLCLVAGAGMVIAGTPTV, VVFTLGGGVLAIGASGTFNHV, VPVANALAFGGLLAVASLWAF, LLAAALGLAAIAFYSVVYTLI, NTVQNTVIGGAAGALPALIGY, AAVTGTIGIGGLVLAAVIFLW, HIVFYLGATLLGAGALAAVTD, LGWLYAATAVLAAGVFLWAVV, and FHASNAYLGLVLVAILIDSLA. The protoheme IX prenyltransferase stretch occupies residues 187 to 451; it reads MWLLCLVAGA…LVLVAILIDS (265 aa).

In the C-terminal section; belongs to the UbiA prenyltransferase family. Protoheme IX farnesyltransferase subfamily.

The protein resides in the cell membrane. The catalysed reaction is heme b + (2E,6E)-farnesyl diphosphate + H2O = Fe(II)-heme o + diphosphate. Its pathway is porphyrin-containing compound metabolism; heme O biosynthesis; heme O from protoheme: step 1/1. Its function is as follows. Converts heme B (protoheme IX) to heme O by substitution of the vinyl group on carbon 2 of heme B porphyrin ring with a hydroxyethyl farnesyl side group. The sequence is that of Protoheme IX farnesyltransferase 1 (ctaB1) from Natronomonas pharaonis (strain ATCC 35678 / DSM 2160 / CIP 103997 / JCM 8858 / NBRC 14720 / NCIMB 2260 / Gabara) (Halobacterium pharaonis).